We begin with the raw amino-acid sequence, 411 residues long: Translation initiation factor 2 subunit gamma (411 aa).

Residues Gln-9–Lys-201 form the tr-type G domain. Positions Gly-18–Ser-25 are G1. Residues Asp-21, Ser-25, Gly-46, and Ser-48 each coordinate Mg(2+). Residue Asp-21 to Thr-26 participates in GTP binding. Positions Gly-46 to Lys-50 are G2. The G3 stretch occupies residues Asp-88–Gly-91. GTP-binding positions include Asn-144–Asp-147 and Ser-179–Tyr-181. A G4 region spans residues Asn-144–Asp-147. The segment at Ser-179 to Tyr-181 is G5.

The protein belongs to the TRAFAC class translation factor GTPase superfamily. Classic translation factor GTPase family. EIF2G subfamily. In terms of assembly, heterotrimer composed of an alpha, a beta and a gamma chain. The cofactor is Mg(2+).

The catalysed reaction is GTP + H2O = GDP + phosphate + H(+). In terms of biological role, eIF-2 functions in the early steps of protein synthesis by forming a ternary complex with GTP and initiator tRNA. The polypeptide is Translation initiation factor 2 subunit gamma (Thermoplasma acidophilum (strain ATCC 25905 / DSM 1728 / JCM 9062 / NBRC 15155 / AMRC-C165)).